We begin with the raw amino-acid sequence, 380 residues long: MANLRKTHPLLKIANDALVDLPAPSNISVWWNFGSLLGLCLATQILTGLFLAMHYTSDISTAFSSVCHICRDVSYGWLIRNIHANGASFFFICIYMHIARGLYYGSYLYKETWNIGVVLLLLTMMTAFVGYVLPWGQMSFWGATVITNLLSAVPYVGGALVQWIWGGFSVDNATLTRFFAFHFLFPFVIAAATVLHLLFLHETGSNNPAGINSDADKISFHPYFSYKDLLGFVAMLLGLTSLALFAPNLLGDPDNFTPANPLVTPPHIKPEWYFLFAYAILRSIPNKLGGVLALLFSILVLMVVPILHTSKQRGLTFRPLTQFLFWALVADMLILTWIGGMPVEHPFIIIGQIASVIYFTIFLVLSPLAGWAENKALQWA.

4 helical membrane passes run 33–53, 77–98, 113–133, and 178–198; these read FGSLLGLCLATQILTGLFLAM, WLIRNIHANGASFFFICIYMHI, WNIGVVLLLLTMMTAFVGYVL, and FFAFHFLFPFVIAAATVLHLL. 2 residues coordinate heme b: H83 and H97. Heme b-binding residues include H182 and H196. H201 serves as a coordination point for a ubiquinone. 4 consecutive transmembrane segments (helical) span residues 226-246, 288-308, 320-340, and 347-367; these read YKDLLGFVAMLLGLTSLALFA, LGGVLALLFSILVLMVVPILH, LTQFLFWALVADMLILTWIGG, and FIIIGQIASVIYFTIFLVLSP.

It belongs to the cytochrome b family. The cytochrome bc1 complex contains 3 respiratory subunits (MT-CYB, CYC1 and UQCRFS1), 2 core proteins (UQCRC1 and UQCRC2) and probably 6 low-molecular weight proteins. The cofactor is heme b.

The protein resides in the mitochondrion inner membrane. In terms of biological role, component of the ubiquinol-cytochrome c reductase complex (complex III or cytochrome b-c1 complex) that is part of the mitochondrial respiratory chain. The b-c1 complex mediates electron transfer from ubiquinol to cytochrome c. Contributes to the generation of a proton gradient across the mitochondrial membrane that is then used for ATP synthesis. The sequence is that of Cytochrome b (mt-cyb) from Oncorhynchus keta (Chum salmon).